The chain runs to 196 residues: MIPVVIEQTSRGERSYDIYSRLLKDRIIMLTGPVEDNMANSIIAQLLFLDAQDNTKDIYLYVNTPGGSVSAGLAIVDTMNFIKSDVQTIVMGVAASMGTIIASSGAKGKRFMLPNAEYLIHQPMGGAGSGTQQTDMAIVAEHLLRTRNTLEKILAENSGKSVEQIHKDAERDYWMSAQETLEYGFIDEIMENSNLS.

Catalysis depends on Ser96, which acts as the Nucleophile. The active site involves His121.

The protein belongs to the peptidase S14 family. Fourteen ClpP subunits assemble into 2 heptameric rings which stack back to back to give a disk-like structure with a central cavity, resembling the structure of eukaryotic proteasomes.

The protein resides in the cytoplasm. The enzyme catalyses Hydrolysis of proteins to small peptides in the presence of ATP and magnesium. alpha-casein is the usual test substrate. In the absence of ATP, only oligopeptides shorter than five residues are hydrolyzed (such as succinyl-Leu-Tyr-|-NHMec, and Leu-Tyr-Leu-|-Tyr-Trp, in which cleavage of the -Tyr-|-Leu- and -Tyr-|-Trp bonds also occurs).. In terms of biological role, cleaves peptides in various proteins in a process that requires ATP hydrolysis. Has a chymotrypsin-like activity. Plays a major role in the degradation of misfolded proteins. The protein is ATP-dependent Clp protease proteolytic subunit of Streptococcus sanguinis (strain SK36).